The chain runs to 525 residues: GMP synthase [glutamine-hydrolyzing] (525 aa).

In terms of domain architecture, Glutamine amidotransferase type-1 spans 8–207 (KILILDFGSQ…VMDICGCDNK (200 aa)). The active-site Nucleophile is cysteine 85. Active-site residues include histidine 181 and glutamate 183. Positions 208–400 (WQPASIIEDA…LGLPYDMLYR (193 aa)) constitute a GMPS ATP-PPase domain. Position 235 to 241 (235 to 241 (SGGVDSS)) interacts with ATP.

As to quaternary structure, homodimer.

The catalysed reaction is XMP + L-glutamine + ATP + H2O = GMP + L-glutamate + AMP + diphosphate + 2 H(+). It participates in purine metabolism; GMP biosynthesis; GMP from XMP (L-Gln route): step 1/1. Its function is as follows. Catalyzes the synthesis of GMP from XMP. This chain is GMP synthase [glutamine-hydrolyzing], found in Shewanella amazonensis (strain ATCC BAA-1098 / SB2B).